Consider the following 131-residue polypeptide: Large-conductance mechanosensitive channel (131 aa).

The next 2 helical transmembrane spans lie at 14 to 34 (VIDLAVGVIIGGAFGKIVTSL) and 67 to 87 (GSFIQTVIDFLIISFSIFIFI).

It belongs to the MscL family. In terms of assembly, homopentamer.

It is found in the cell membrane. Functionally, channel that opens in response to stretch forces in the membrane lipid bilayer. May participate in the regulation of osmotic pressure changes within the cell. In Bacillus pumilus (strain SAFR-032), this protein is Large-conductance mechanosensitive channel.